The chain runs to 191 residues: Oleosin 20.3 kDa (191 aa).

Ala2 is subject to N-acetylalanine. A polar region spans residues 2 to 54 (ANVDRDRRVHVDRTDKRVHQPNYEDDVGFGGYGGYGAGSDYKSRGPSTNQILA). 2 helical membrane passes run 52-72 (ILAL…AGLT) and 99-119 (LTIG…LTGL). The segment at 55 to 128 (LIAGVPIGGT…LSSVSWVLNY (74 aa)) is hydrophobic.

This sequence belongs to the oleosin family.

It localises to the lipid droplet. It is found in the membrane. May have a structural role to stabilize the lipid body during desiccation of the seed by preventing coalescence of the oil. Probably interacts with both lipid and phospholipid moieties of lipid bodies. May also provide recognition signals for specific lipase anchorage in lipolysis during seedling growth. This chain is Oleosin 20.3 kDa (OL2), found in Arabidopsis thaliana (Mouse-ear cress).